A 183-amino-acid chain; its full sequence is Large ribosomal subunit protein uL5 (183 aa).

It belongs to the universal ribosomal protein uL5 family. Part of the 50S ribosomal subunit; part of the 5S rRNA/L5/L18/L25 subcomplex. Contacts the 5S rRNA and the P site tRNA. Forms a bridge to the 30S subunit in the 70S ribosome.

This is one of the proteins that bind and probably mediate the attachment of the 5S RNA into the large ribosomal subunit, where it forms part of the central protuberance. In the 70S ribosome it contacts protein S13 of the 30S subunit (bridge B1b), connecting the 2 subunits; this bridge is implicated in subunit movement. Contacts the P site tRNA; the 5S rRNA and some of its associated proteins might help stabilize positioning of ribosome-bound tRNAs. This Chlorobaculum tepidum (strain ATCC 49652 / DSM 12025 / NBRC 103806 / TLS) (Chlorobium tepidum) protein is Large ribosomal subunit protein uL5.